The chain runs to 313 residues: Probable cell division protein WhiA (313 aa).

A DNA-binding region (H-T-H motif) is located at residues 275–308 (SLRELGELAQPPLSKSCVNHRLRKLEQIAEHILA).

The protein belongs to the WhiA family.

Involved in cell division and chromosome segregation. The sequence is that of Probable cell division protein WhiA from Desulforudis audaxviator (strain MP104C).